A 219-amino-acid chain; its full sequence is Vesicle-associated membrane protein 711 (219 aa).

The residue at position 2 (A2) is an N-acetylalanine. The Cytoplasmic segment spans residues 2 to 189; that stretch reads AILYALVARG…RSNVWWRNCK (188 aa). The region spanning 7–111 is the Longin domain; the sequence is LVARGTVVLS…AMNEEFSRVL (105 aa). The 61-residue stretch at 126 to 186 folds into the v-SNARE coiled-coil homology domain; the sequence is RINRIKGEMN…RRFRSNVWWR (61 aa). Residues 190-210 traverse the membrane as a helical; Anchor for type IV membrane protein segment; the sequence is LTVLLILLLLVIIYIAVAFLC. The Vesicular segment spans residues 211–219; it reads HGPTLPSCI.

The protein belongs to the synaptobrevin family. Expressed in flowers, leaves, stems and roots.

It is found in the vacuole membrane. It localises to the prevacuolar compartment membrane. In terms of biological role, involved in the targeting and/or fusion of transport vesicles to their target membrane. This chain is Vesicle-associated membrane protein 711, found in Arabidopsis thaliana (Mouse-ear cress).